Here is a 149-residue protein sequence, read N- to C-terminus: MLEVKTISVEDTYEIRHRILRPHQSIEQCKYKEDHAEGSFHLGVFYDGTLISIASFSPQSQPLLTEASAYRLRGMATLEGYRDQKAGSTLIKHAEHKLAESGVQAVWCNARHHVKGYYAKLGWKELGEPFDIPGIGNHIVMYKTLRTSR.

The N-acetyltransferase domain maps to 2 to 146 (LEVKTISVED…NHIVMYKTLR (145 aa)).

Belongs to the acetyltransferase family.

This is an uncharacterized protein from Bacillus subtilis (strain 168).